A 27-amino-acid polypeptide reads, in one-letter code: Trypsin inhibitor 5 (27 aa).

3 disulfide bridges follow: Cys-1/Cys-18, Cys-8/Cys-20, and Cys-14/Cys-26.

It localises to the secreted. Functionally, inhibits trypsin. In Sechium edule (Chayote), this protein is Trypsin inhibitor 5.